The primary structure comprises 164 residues: MPGVLRALLLLAAAAPLLADVNVMKDVTLGFGQALDKCREESQLTEEKMEEFFHFWRDDFKFEHRELGCAIQCMSRHFNLLTDSSRMHHDNTEKFIQSFPNGEVLARQMVELIHSCEKQFDHEEDHCWRISHLADCFKSSCVQRGIAPSMELMMTEFIMEAEAR.

An N-terminal signal peptide occupies residues 1–19 (MPGVLRALLLLAAAAPLLA). Intrachain disulfides connect Cys38–Cys73, Cys69–Cys127, and Cys116–Cys136.

Belongs to the PBP/GOBP family. In terms of tissue distribution, antenna.

In terms of biological role, present in the aqueous fluid surrounding olfactory sensory dendrites and are thought to aid in the capture and transport of hydrophobic odorants into and through this fluid. The chain is General odorant-binding protein 1 from Heliothis virescens (Tobacco budworm moth).